Consider the following 200-residue polypeptide: COMM domain-containing protein 7 (200 aa).

The COMM domain occupies Gln-133–Cys-200.

The protein belongs to the COMM domain-containing protein 7 family. In terms of assembly, component of the commander complex consisting of the CCC subcomplex and the retriever subcomplex. Component of the CCC (COMMD/CCDC22/CCDC93) subcomplex consisting of COMMD1, COMMD2, COMMD3, COMMD4, COMMD5, COMMD6, COMMD7, COMMD8, COMMD9, COMMD10, CCDC22 and CCDC93; within the complex forms a heterodimer with COMMD9. Interacts with RELA. Interacts with CCDC22, CCDC93, SCNN1B, CUL7. Widely expressed with highest expression in lung.

It is found in the cytoplasmic vesicle. Scaffold protein in the commander complex that is essential for endosomal recycling of transmembrane cargos; the commander complex is composed of the CCC subcomplex and the retriever subcomplex. May modulate activity of cullin-RING E3 ubiquitin ligase (CRL) complexes. Associates with the NF-kappa-B complex and suppresses its transcriptional activity. This chain is COMM domain-containing protein 7 (COMMD7), found in Homo sapiens (Human).